Here is a 252-residue protein sequence, read N- to C-terminus: Pyrroloquinoline-quinone synthase (252 aa).

The protein belongs to the PqqC family.

The catalysed reaction is 6-(2-amino-2-carboxyethyl)-7,8-dioxo-1,2,3,4,7,8-hexahydroquinoline-2,4-dicarboxylate + 3 O2 = pyrroloquinoline quinone + 2 H2O2 + 2 H2O + H(+). It participates in cofactor biosynthesis; pyrroloquinoline quinone biosynthesis. In terms of biological role, ring cyclization and eight-electron oxidation of 3a-(2-amino-2-carboxyethyl)-4,5-dioxo-4,5,6,7,8,9-hexahydroquinoline-7,9-dicarboxylic-acid to PQQ. In Acinetobacter baumannii (strain AB307-0294), this protein is Pyrroloquinoline-quinone synthase.